A 301-amino-acid chain; its full sequence is Aldose reductase (301 aa).

Residue 11–20 participates in NADP(+) binding; it reads GKEIPTVGLG. Tyrosine 51 serves as the catalytic Proton donor. Histidine 111 contributes to the substrate binding site. 209-266 is an NADP(+) binding site; sequence SSLGSAPGSSAKVRDDKTIKAIAKKYGCAPSQIILSYITAQGICVIPKSRSKEHLREN.

This sequence belongs to the aldo/keto reductase family.

The protein resides in the cytoplasm. It carries out the reaction an alditol + NAD(+) = an aldose + NADH + H(+). It catalyses the reaction an alditol + NADP(+) = an aldose + NADPH + H(+). Functionally, catalyzes the NADPH-dependent reduction of a wide variety of carbonyl-containing compounds to their corresponding alcohols with a broad range of catalytic efficiencies. This is Aldose reductase from Encephalitozoon cuniculi (strain GB-M1) (Microsporidian parasite).